Consider the following 116-residue polypeptide: Phosphoribosyl-AMP cyclohydrolase (116 aa).

Residue Asp-82 coordinates Mg(2+). Position 83 (Cys-83) interacts with Zn(2+). 2 residues coordinate Mg(2+): Asp-84 and Asp-86. Zn(2+) contacts are provided by Cys-99 and Cys-106.

The protein belongs to the PRA-CH family. As to quaternary structure, homodimer. Mg(2+) serves as cofactor. It depends on Zn(2+) as a cofactor.

The protein resides in the cytoplasm. The enzyme catalyses 1-(5-phospho-beta-D-ribosyl)-5'-AMP + H2O = 1-(5-phospho-beta-D-ribosyl)-5-[(5-phospho-beta-D-ribosylamino)methylideneamino]imidazole-4-carboxamide. It participates in amino-acid biosynthesis; L-histidine biosynthesis; L-histidine from 5-phospho-alpha-D-ribose 1-diphosphate: step 3/9. Its function is as follows. Catalyzes the hydrolysis of the adenine ring of phosphoribosyl-AMP. This is Phosphoribosyl-AMP cyclohydrolase from Saccharopolyspora erythraea (strain ATCC 11635 / DSM 40517 / JCM 4748 / NBRC 13426 / NCIMB 8594 / NRRL 2338).